A 375-amino-acid polypeptide reads, in one-letter code: Putative glutamate--cysteine ligase 2 (375 aa).

Belongs to the glutamate--cysteine ligase type 2 family. YbdK subfamily.

The enzyme catalyses L-cysteine + L-glutamate + ATP = gamma-L-glutamyl-L-cysteine + ADP + phosphate + H(+). Its function is as follows. ATP-dependent carboxylate-amine ligase which exhibits weak glutamate--cysteine ligase activity. The sequence is that of Putative glutamate--cysteine ligase 2 from Sorangium cellulosum (strain So ce56) (Polyangium cellulosum (strain So ce56)).